Reading from the N-terminus, the 640-residue chain is ATP-dependent DNA helicase YoaA (640 aa).

A Helicase ATP-binding domain is found at 16–278 (ELSQNIKGFR…KDMQQLGTTS (263 aa)). ATP is bound at residue 51 to 58 (AGTGTGKT). Cysteine 114 lines the [4Fe-4S] cluster pocket. The DEAH box motif lies at 125-128 (GVLG). 3 residues coordinate [4Fe-4S] cluster: cysteine 174, cysteine 179, and cysteine 185. A DEAH box motif is present at residues 231–234 (DEAH). The Helicase C-terminal domain maps to 458 to 634 (SLGEILLPVI…SRTRDLNKVI (177 aa)).

It belongs to the helicase family. DinG subfamily. It depends on [4Fe-4S] cluster as a cofactor.

It catalyses the reaction Couples ATP hydrolysis with the unwinding of duplex DNA at the replication fork by translocating in the 5'-3' direction. This creates two antiparallel DNA single strands (ssDNA). The leading ssDNA polymer is the template for DNA polymerase III holoenzyme which synthesizes a continuous strand.. It carries out the reaction ATP + H2O = ADP + phosphate + H(+). Probably a 5'-3' DNA helicase. The chain is ATP-dependent DNA helicase YoaA from Haemophilus influenzae (strain ATCC 51907 / DSM 11121 / KW20 / Rd).